We begin with the raw amino-acid sequence, 304 residues long: Tyrosine recombinase XerD (304 aa).

Positions 1 to 92 constitute a Core-binding (CB) domain; it reads MKARVLAKTW…VARGLHKFAL (92 aa). The 186-residue stretch at 113 to 298 folds into the Tyr recombinase domain; the sequence is HLPDTLSINE…TADSLREVWR (186 aa). Catalysis depends on residues Arg156, Lys180, His250, Arg253, and His276. The O-(3'-phospho-DNA)-tyrosine intermediate role is filled by Tyr285.

The protein belongs to the 'phage' integrase family. XerD subfamily. As to quaternary structure, forms a cyclic heterotetrameric complex composed of two molecules of XerC and two molecules of XerD.

The protein resides in the cytoplasm. Site-specific tyrosine recombinase, which acts by catalyzing the cutting and rejoining of the recombining DNA molecules. The XerC-XerD complex is essential to convert dimers of the bacterial chromosome into monomers to permit their segregation at cell division. It also contributes to the segregational stability of plasmids. The polypeptide is Tyrosine recombinase XerD (Corynebacterium glutamicum (strain ATCC 13032 / DSM 20300 / JCM 1318 / BCRC 11384 / CCUG 27702 / LMG 3730 / NBRC 12168 / NCIMB 10025 / NRRL B-2784 / 534)).